The chain runs to 777 residues: Penicillin-binding protein 1B (777 aa).

Residues 1-30 are Cytoplasmic-facing; that stretch reads MTRKSSNRSRGRKARSGKSASSSKLQIWLG. Residues 31–52 traverse the membrane as a helical; Signal-anchor for type II membrane protein segment; sequence RIWSIGWKLALTLAAVLVFIGI. Topologically, residues 53-777 are periplasmic; that stretch reads YLDSMIKQRF…TEWIKKLFEW (725 aa). The interval 162-334 is transglycosylase; that stretch reads LRLEPKLMGM…SYYNPMRYAE (173 aa). Glutamate 200 functions as the Proton donor; for transglycosylase activity in the catalytic mechanism. The tract at residues 415-709 is transpeptidase; it reads SKLEQAIHDQ…ASGALRVYAQ (295 aa). Residue serine 476 is the Acyl-ester intermediate; for transpeptidase activity of the active site.

It in the N-terminal section; belongs to the glycosyltransferase 51 family. In the C-terminal section; belongs to the transpeptidase family.

It is found in the cell inner membrane. The catalysed reaction is [GlcNAc-(1-&gt;4)-Mur2Ac(oyl-L-Ala-gamma-D-Glu-L-Lys-D-Ala-D-Ala)](n)-di-trans,octa-cis-undecaprenyl diphosphate + beta-D-GlcNAc-(1-&gt;4)-Mur2Ac(oyl-L-Ala-gamma-D-Glu-L-Lys-D-Ala-D-Ala)-di-trans,octa-cis-undecaprenyl diphosphate = [GlcNAc-(1-&gt;4)-Mur2Ac(oyl-L-Ala-gamma-D-Glu-L-Lys-D-Ala-D-Ala)](n+1)-di-trans,octa-cis-undecaprenyl diphosphate + di-trans,octa-cis-undecaprenyl diphosphate + H(+). It catalyses the reaction Preferential cleavage: (Ac)2-L-Lys-D-Ala-|-D-Ala. Also transpeptidation of peptidyl-alanyl moieties that are N-acyl substituents of D-alanine.. It functions in the pathway cell wall biogenesis; peptidoglycan biosynthesis. Its function is as follows. Cell wall formation. Synthesis of cross-linked peptidoglycan from the lipid intermediates. The enzyme has a penicillin-insensitive transglycosylase N-terminal domain (formation of linear glycan strands) and a penicillin-sensitive transpeptidase C-terminal domain (cross-linking of the peptide subunits). The polypeptide is Penicillin-binding protein 1B (mrcB) (Vibrio cholerae serotype O1 (strain ATCC 39315 / El Tor Inaba N16961)).